Consider the following 117-residue polypeptide: ATP-dependent Clp protease adapter protein ClpS 1 (117 aa).

It belongs to the ClpS family. As to quaternary structure, binds to the N-terminal domain of the chaperone ClpA.

Functionally, involved in the modulation of the specificity of the ClpAP-mediated ATP-dependent protein degradation. This Agrobacterium fabrum (strain C58 / ATCC 33970) (Agrobacterium tumefaciens (strain C58)) protein is ATP-dependent Clp protease adapter protein ClpS 1.